The following is a 153-amino-acid chain: MRPMTIDIDELAFALDTPGIDHYLDLYSGKVLLISAEAPDPELDALLENEPERLLLIDPLSTTQSLGLMQDFLREVEEPHAYATLANALQSRKPFKAFKHSLMEYPELLQDWYRYQNERLREWALDWLEDNDIQPAARQSPTSLLPPPGKPFA.

Belongs to the UPF0158 family.

This is UPF0158 protein PA5073 from Pseudomonas aeruginosa (strain ATCC 15692 / DSM 22644 / CIP 104116 / JCM 14847 / LMG 12228 / 1C / PRS 101 / PAO1).